The sequence spans 145 residues: Hemoglobin subunit beta (145 aa).

The Globin domain occupies 1–145 (MLTAEEKAAV…VANALAHRYH (145 aa)). Phosphothreonine is present on Thr11. Ser43 is subject to Phosphoserine. Lys58 carries the N6-acetyllysine modification. His62 is a binding site for heme b. Position 81 is an N6-acetyllysine (Lys81). Heme b is bound at residue His91. Cys92 carries the S-nitrosocysteine modification.

It belongs to the globin family. In terms of assembly, heterotetramer of two alpha chains and two beta chains. In terms of tissue distribution, red blood cells.

Its function is as follows. Involved in oxygen transport from the lung to the various peripheral tissues. This Bos gaurus frontalis (Domestic gayal) protein is Hemoglobin subunit beta (HBB).